The sequence spans 252 residues: dITP/XTP pyrophosphatase (252 aa).

7 to 12 (THNEGK) is a substrate binding site. D74 functions as the Proton acceptor in the catalytic mechanism. D74 is a binding site for Mg(2+). Substrate contacts are provided by residues S75 and 193–196 (FGYD). The disordered stretch occupies residues 202–229 (DDQPAGRVSTEPDHEGEPLTSAEMTPAE). Substrate-binding positions include K230 and 235–236 (HR).

This sequence belongs to the HAM1 NTPase family. In terms of assembly, homodimer. Requires Mg(2+) as cofactor.

The catalysed reaction is XTP + H2O = XMP + diphosphate + H(+). The enzyme catalyses dITP + H2O = dIMP + diphosphate + H(+). It carries out the reaction ITP + H2O = IMP + diphosphate + H(+). Its function is as follows. Pyrophosphatase that catalyzes the hydrolysis of nucleoside triphosphates to their monophosphate derivatives, with a high preference for the non-canonical purine nucleotides XTP (xanthosine triphosphate), dITP (deoxyinosine triphosphate) and ITP. Seems to function as a house-cleaning enzyme that removes non-canonical purine nucleotides from the nucleotide pool, thus preventing their incorporation into DNA/RNA and avoiding chromosomal lesions. This is dITP/XTP pyrophosphatase from Bifidobacterium longum (strain DJO10A).